The sequence spans 117 residues: Hemerythrin subunit alpha (117 aa).

Residues His-24, His-53, Glu-57, His-72, His-76, His-105, and Asp-110 each coordinate Fe cation.

Belongs to the hemerythrin family. Octamer composed of two types of chains: alpha and beta.

Hemerythrin is a respiratory protein in blood cells of certain marine worms. The oxygen-binding site in each chain contains two iron atoms. This is Hemerythrin subunit alpha from Lingula reevii (Inarticulated brachiopod).